Reading from the N-terminus, the 629-residue chain is tRNA uridine 5-carboxymethylaminomethyl modification enzyme MnmG (629 aa).

Residue 13 to 18 participates in FAD binding; that stretch reads GGGHAG. Residue 273 to 287 participates in NAD(+) binding; it reads GPRYCPSIEDKVVRF.

This sequence belongs to the MnmG family. As to quaternary structure, homodimer. Heterotetramer of two MnmE and two MnmG subunits. FAD serves as cofactor.

The protein localises to the cytoplasm. In terms of biological role, NAD-binding protein involved in the addition of a carboxymethylaminomethyl (cmnm) group at the wobble position (U34) of certain tRNAs, forming tRNA-cmnm(5)s(2)U34. This Nitrosococcus oceani (strain ATCC 19707 / BCRC 17464 / JCM 30415 / NCIMB 11848 / C-107) protein is tRNA uridine 5-carboxymethylaminomethyl modification enzyme MnmG.